The sequence spans 153 residues: UPF0260 protein CKO_01185 (153 aa).

It belongs to the UPF0260 family.

The protein is UPF0260 protein CKO_01185 of Citrobacter koseri (strain ATCC BAA-895 / CDC 4225-83 / SGSC4696).